The sequence spans 220 residues: Deoxyribose-phosphate aldolase (220 aa).

The Proton donor/acceptor role is filled by aspartate 89. Catalysis depends on lysine 151, which acts as the Schiff-base intermediate with acetaldehyde. Lysine 180 serves as the catalytic Proton donor/acceptor.

The protein belongs to the DeoC/FbaB aldolase family. DeoC type 1 subfamily.

The protein localises to the cytoplasm. It catalyses the reaction 2-deoxy-D-ribose 5-phosphate = D-glyceraldehyde 3-phosphate + acetaldehyde. The protein operates within carbohydrate degradation; 2-deoxy-D-ribose 1-phosphate degradation; D-glyceraldehyde 3-phosphate and acetaldehyde from 2-deoxy-alpha-D-ribose 1-phosphate: step 2/2. In terms of biological role, catalyzes a reversible aldol reaction between acetaldehyde and D-glyceraldehyde 3-phosphate to generate 2-deoxy-D-ribose 5-phosphate. In Lactococcus lactis subsp. lactis (strain IL1403) (Streptococcus lactis), this protein is Deoxyribose-phosphate aldolase.